A 296-amino-acid polypeptide reads, in one-letter code: 4-hydroxybenzoate octaprenyltransferase (296 aa).

8 consecutive transmembrane segments (helical) span residues I29 to A49, L52 to I72, A102 to A122, Y146 to A166, G169 to Y189, V219 to F239, L241 to W261, and F275 to V295.

This sequence belongs to the UbiA prenyltransferase family. Mg(2+) is required as a cofactor.

Its subcellular location is the cell inner membrane. The enzyme catalyses all-trans-octaprenyl diphosphate + 4-hydroxybenzoate = 4-hydroxy-3-(all-trans-octaprenyl)benzoate + diphosphate. It functions in the pathway cofactor biosynthesis; ubiquinone biosynthesis. In terms of biological role, catalyzes the prenylation of para-hydroxybenzoate (PHB) with an all-trans polyprenyl group. Mediates the second step in the final reaction sequence of ubiquinone-8 (UQ-8) biosynthesis, which is the condensation of the polyisoprenoid side chain with PHB, generating the first membrane-bound Q intermediate 3-octaprenyl-4-hydroxybenzoate. The sequence is that of 4-hydroxybenzoate octaprenyltransferase from Pseudomonas syringae pv. syringae (strain B728a).